Reading from the N-terminus, the 892-residue chain is LEAF RUST 10 DISEASE-RESISTANCE LOCUS RECEPTOR-LIKE PROTEIN KINASE-like 2.8 (892 aa).

The N-terminal stretch at 1 to 27 (MYYHSLSSYSILFFLFSLFHHLPCASS) is a signal peptide. At 28-496 (NQGLGWCESL…RFIATLVRYT (469 aa)) the chain is on the extracellular side. N-linked (GlcNAc...) asparagine glycosylation is found at asparagine 42, asparagine 71, asparagine 88, asparagine 112, asparagine 186, asparagine 222, asparagine 230, asparagine 286, asparagine 358, asparagine 384, asparagine 407, and asparagine 458. The helical transmembrane segment at 497 to 517 (FIALGALTGVVIVFLVLLCPC) threads the bilayer. At 518–892 (FRVQIFRKRK…TNSKLESSSL (375 aa)) the chain is on the cytoplasmic side. The residue at position 547 (threonine 547) is a Phosphothreonine. A Protein kinase domain is found at 556 to 854 (KSFTEVVGRG…ALEVPPRPVL (299 aa)). ATP contacts are provided by residues 562 to 570 (VGRGGFGIV) and lysine 584. Position 629 is a phosphotyrosine (tyrosine 629). Catalysis depends on aspartate 680, which acts as the Proton acceptor. Residues threonine 717 and threonine 720 each carry the phosphothreonine modification.

This sequence belongs to the protein kinase superfamily. Ser/Thr protein kinase family.

It localises to the membrane. It catalyses the reaction L-seryl-[protein] + ATP = O-phospho-L-seryl-[protein] + ADP + H(+). The enzyme catalyses L-threonyl-[protein] + ATP = O-phospho-L-threonyl-[protein] + ADP + H(+). The protein is LEAF RUST 10 DISEASE-RESISTANCE LOCUS RECEPTOR-LIKE PROTEIN KINASE-like 2.8 of Arabidopsis thaliana (Mouse-ear cress).